A 467-amino-acid chain; its full sequence is A-type ATP synthase subunit B (467 aa).

The disordered stretch occupies residues G95–V114.

Belongs to the ATPase alpha/beta chains family. Has multiple subunits with at least A(3), B(3), C, D, E, F, H, I and proteolipid K(x).

The protein resides in the cell membrane. Its function is as follows. Component of the A-type ATP synthase that produces ATP from ADP in the presence of a proton gradient across the membrane. The B chain is a regulatory subunit. This is A-type ATP synthase subunit B from Pyrobaculum neutrophilum (strain DSM 2338 / JCM 9278 / NBRC 100436 / V24Sta) (Thermoproteus neutrophilus).